The chain runs to 876 residues: Alanine--tRNA ligase (876 aa).

Histidine 568, histidine 572, cysteine 669, and histidine 673 together coordinate Zn(2+).

It belongs to the class-II aminoacyl-tRNA synthetase family. Zn(2+) serves as cofactor.

It is found in the cytoplasm. The catalysed reaction is tRNA(Ala) + L-alanine + ATP = L-alanyl-tRNA(Ala) + AMP + diphosphate. Its function is as follows. Catalyzes the attachment of alanine to tRNA(Ala) in a two-step reaction: alanine is first activated by ATP to form Ala-AMP and then transferred to the acceptor end of tRNA(Ala). Also edits incorrectly charged Ser-tRNA(Ala) and Gly-tRNA(Ala) via its editing domain. The protein is Alanine--tRNA ligase of Sulfurihydrogenibium sp. (strain YO3AOP1).